The following is a 213-amino-acid chain: Large ribosomal subunit protein uL1 (213 aa).

This sequence belongs to the universal ribosomal protein uL1 family. As to quaternary structure, part of the 50S ribosomal subunit.

Functionally, binds directly to 23S rRNA. Probably involved in E site tRNA release. Its function is as follows. Protein L1 is also a translational repressor protein, it controls the translation of its operon by binding to its mRNA. The protein is Large ribosomal subunit protein uL1 of Methanocorpusculum labreanum (strain ATCC 43576 / DSM 4855 / Z).